The following is a 157-amino-acid chain: Phosphopantetheine adenylyltransferase (157 aa).

Substrate is bound at residue Ser-9. ATP-binding positions include 9–10 (SF) and His-17. Substrate is bound by residues Lys-41, Leu-73, and Lys-87. Residues 88–90 (GLR), Glu-98, and 123–129 (YSYLSSS) each bind ATP.

Belongs to the bacterial CoaD family. Homohexamer. Requires Mg(2+) as cofactor.

Its subcellular location is the cytoplasm. It catalyses the reaction (R)-4'-phosphopantetheine + ATP + H(+) = 3'-dephospho-CoA + diphosphate. It participates in cofactor biosynthesis; coenzyme A biosynthesis; CoA from (R)-pantothenate: step 4/5. Functionally, reversibly transfers an adenylyl group from ATP to 4'-phosphopantetheine, yielding dephospho-CoA (dPCoA) and pyrophosphate. The chain is Phosphopantetheine adenylyltransferase from Alkaliphilus metalliredigens (strain QYMF).